The sequence spans 329 residues: N-acetylmuramoyl-L-alanine amidase sle1 (329 aa).

The N-terminal stretch at 1-26 (MNKKILATAVLGTGALSTLFAHQAEA) is a signal peptide. LysM domains follow at residues 28 to 71 (TTHT…VLKV), 88 to 131 (STYT…QLKV), and 152 to 195 (STYT…KLRV). The Peptidase C51 domain maps to 205–329 (STRSAQSTYY…YQVRNYKFIH (125 aa)).

The protein resides in the secreted. It is found in the cell surface. The enzyme catalyses Hydrolyzes the link between N-acetylmuramoyl residues and L-amino acid residues in certain cell-wall glycopeptides.. Peptidoglycan hydrolase involved in the splitting of the septum during cell division. This Staphylococcus haemolyticus (strain JCSC1435) protein is N-acetylmuramoyl-L-alanine amidase sle1 (sle1).